A 338-amino-acid polypeptide reads, in one-letter code: LINE-1 retrotransposable element ORF1 protein (338 aa).

Residues 1-40 form a disordered region; that stretch reads MGKKQNRKTGNSKTQSASPPPKERSSSPATEQSWMENDFD. 2 stretches are compositionally biased toward polar residues: residues 8-17 and 26-35; these read KTGNSKTQSA and SSPATEQSWM. Positions 49–153 form a coiled coil; the sequence is RSNYSELRED…QSLQEIWDYV (105 aa). Residues 157 to 252 form an RNA recognition motif (RRM) domain region; the sequence is NLRLIGVPES…KGKPIRLTAD (96 aa). The tract at residues 253–317 is C-terminal domain (CTD); it reads LSAETLQARR…TTRPALKELL (65 aa).

This sequence belongs to the transposase 22 family. As to quaternary structure, homotrimer (via coiled coil domain). May also form larger homooligomers. May interact with DDX39A, HNRNPA1, SERBP1 and YBX1. Interacts with TEX19 and UBR2. Interacts with MOV10. Interacts with APOBEC3D; this interaction inhibits LINE-1 retrotransposition. In terms of processing, polyubiquitinated, probably by UBR2, which induces its degradation.

The protein resides in the nucleus. It is found in the nucleolus. Its subcellular location is the cytoplasm. The protein localises to the cytoplasmic ribonucleoprotein granule. It localises to the stress granule. Functionally, nucleic acid-binding protein which is essential for retrotransposition of LINE-1 elements in the genome. Functions as a nucleic acid chaperone binding its own transcript and therefore preferentially mobilizing the transcript from which they are encoded. The chain is LINE-1 retrotransposable element ORF1 protein (L1RE1) from Homo sapiens (Human).